We begin with the raw amino-acid sequence, 1412 residues long: DNA-directed RNA polymerase subunit beta (1412 aa).

This sequence belongs to the RNA polymerase beta chain family. In terms of assembly, the RNAP catalytic core consists of 2 alpha, 1 beta, 1 beta' and 1 omega subunit. When a sigma factor is associated with the core the holoenzyme is formed, which can initiate transcription.

The catalysed reaction is RNA(n) + a ribonucleoside 5'-triphosphate = RNA(n+1) + diphosphate. In terms of biological role, DNA-dependent RNA polymerase catalyzes the transcription of DNA into RNA using the four ribonucleoside triphosphates as substrates. This chain is DNA-directed RNA polymerase subunit beta, found in Bdellovibrio bacteriovorus (strain ATCC 15356 / DSM 50701 / NCIMB 9529 / HD100).